The chain runs to 445 residues: Glycerophosphocholine choline phosphodiesterase ENPP6 (445 aa).

The first 22 residues, 1–22 (MAGKLGVLLLALVLSLAQPASA), serve as a signal peptide directing secretion. Asp32, Ser71, and Asn92 together coordinate substrate. 2 residues coordinate Zn(2+): Asp32 and Ser71. Residue Ser71 is the Nucleophile of the active site. A Phosphoserine modification is found at Ser71. 2 N-linked (GlcNAc...) asparagine glycosylation sites follow: Asn100 and Asn118. An intrachain disulfide couples Cys142 to Cys154. Residue Asp193 participates in substrate binding. Zn(2+)-binding residues include Asp193, His197, Asp240, and His241. His241 contacts substrate. An N-linked (GlcNAc...) asparagine glycan is attached at Asn341. His356 contacts substrate. Zn(2+) is bound at residue His356. N-linked (GlcNAc...) asparagine glycosylation is present at Asn406. Ser421 carries GPI-anchor amidated serine lipidation. A propeptide spans 422–445 (SAPGAPPCACALVTVLLVLLAILA) (removed in mature form).

The protein belongs to the nucleotide pyrophosphatase/phosphodiesterase family. In terms of assembly, homodimer; disulfide-linked. Homotetramer. Zn(2+) serves as cofactor.

The protein resides in the cell membrane. It catalyses the reaction sn-glycerol 3-phosphocholine + H2O = phosphocholine + glycerol + H(+). It carries out the reaction a 1-acyl-sn-glycero-3-phosphocholine + H2O = a 1-acyl-sn-glycerol + phosphocholine + H(+). The enzyme catalyses a 1-O-alkyl-sn-glycero-3-phosphocholine + H2O = a 1-O-alkyl-sn-glycerol + phosphocholine + H(+). The catalysed reaction is 1-dodecanoyl-sn-glycero-3-phosphocholine + H2O = 1-dodecanoyl-sn-glycerol + phosphocholine + H(+). It catalyses the reaction 1-hexadecanoyl-sn-glycero-3-phosphocholine + H2O = 1-hexadecanoyl-sn-glycerol + phosphocholine + H(+). It carries out the reaction 1-(5Z,8Z,11Z,14Z-eicosatetraenoyl)-sn-glycero-3-phosphocholine + H2O = 1-(5Z,8Z,11Z,14Z-eicosatetraenoyl)-sn-glycerol + phosphocholine + H(+). The enzyme catalyses 1-tetradecanoyl-sn-glycero-3-phosphocholine + H2O = 1-tetradecanoyl-sn-glycerol + phosphocholine + H(+). The catalysed reaction is sphing-4-enine-phosphocholine + H2O = sphing-4-enine + phosphocholine + H(+). It catalyses the reaction 1-(9Z-octadecenoyl)-sn-glycero-3-phosphocholine + H2O = 1-(9Z-octadecenoyl)-sn-glycerol + phosphocholine + H(+). It carries out the reaction 1-(9Z,12Z)-octadecadienoyl-sn-glycero-3-phosphocholine + H2O = 1-(9Z,12Z-octadecadienoyl)-sn-glycerol + phosphocholine + H(+). The enzyme catalyses glycero-2-phosphocholine + H2O = phosphocholine + glycerol + H(+). Its activity is regulated as follows. Inhibited by EDTA and EGTA in vitro. Functionally, choline-specific glycerophosphodiesterase that hydrolyzes glycerophosphocholine (GPC) and lysophosphatidylcholine (LPC) and contributes to supplying choline to the cells. Has a preference for LPC with short (12:0 and 14:0) or polyunsaturated (18:2 and 20:4) fatty acids. In vitro, hydrolyzes only choline-containing lysophospholipids, such as sphingosylphosphorylcholine (SPC), platelet-activating factor (PAF) and lysoPAF, but not other lysophospholipids. The protein is Glycerophosphocholine choline phosphodiesterase ENPP6 of Bos taurus (Bovine).